Consider the following 273-residue polypeptide: MRQIAIYGKGGIGKSTTTQNLTASLSTMGNKIMLVGCDPKADSTRMLLGGLNQKTVLDTLRSEGDEGVDLDVVMQRGFGDIKCVESGGPEPGVGCAGRGIITSIGLLENLGAYTDDLDYVFYDVLGDVVCGGFAMPIREGKAKEIYIVASGELMAIYAANNICKGLAKFAKGGARLGGIICNSRNVDGERELLDAFAKKLGSHLIHFIPRDNIVQRAEINRKTVIDFDPESNQAKEYLTLAHNVQNNDKLVVPTPLPMEELEAMMVEFGIVDL.

8-15 (GKGGIGKS) is an ATP binding site. Cys95 contributes to the [4Fe-4S] cluster binding site. ADP-ribosylarginine; by dinitrogenase reductase ADP-ribosyltransferase is present on Arg98. Residue Cys130 coordinates [4Fe-4S] cluster.

The protein belongs to the NifH/BchL/ChlL family. In terms of assembly, homodimer. The cofactor is [4Fe-4S] cluster. In terms of processing, the reversible ADP-ribosylation of Arg-98 inactivates the nitrogenase reductase and regulates nitrogenase activity.

The enzyme catalyses N2 + 8 reduced [2Fe-2S]-[ferredoxin] + 16 ATP + 16 H2O = H2 + 8 oxidized [2Fe-2S]-[ferredoxin] + 2 NH4(+) + 16 ADP + 16 phosphate + 6 H(+). Its function is as follows. The key enzymatic reactions in nitrogen fixation are catalyzed by the nitrogenase complex, which has 2 components: the iron protein and the molybdenum-iron protein. This Methanosarcina barkeri protein is Nitrogenase iron protein 2 (nifH2).